A 413-amino-acid polypeptide reads, in one-letter code: Argininosuccinate synthase (413 aa).

ATP contacts are provided by residues 12–20 and alanine 39; that span reads AYSGGLDTS. L-citrulline is bound by residues tyrosine 92 and serine 97. An ATP-binding site is contributed by glycine 122. 3 residues coordinate L-aspartate: threonine 124, asparagine 128, and aspartate 129. L-citrulline is bound at residue asparagine 128. Positions 132, 189, 198, 274, and 286 each coordinate L-citrulline.

Belongs to the argininosuccinate synthase family. Type 1 subfamily. As to quaternary structure, homotetramer.

The protein localises to the cytoplasm. It catalyses the reaction L-citrulline + L-aspartate + ATP = 2-(N(omega)-L-arginino)succinate + AMP + diphosphate + H(+). Its pathway is amino-acid biosynthesis; L-arginine biosynthesis; L-arginine from L-ornithine and carbamoyl phosphate: step 2/3. In Aliarcobacter butzleri (strain RM4018) (Arcobacter butzleri), this protein is Argininosuccinate synthase.